The following is a 422-amino-acid chain: Cotranscriptional regulator ARB2A homolog (422 aa).

The signal sequence occupies residues M1 to L19. Positions K213–Y253 are disordered. Residues P229–E242 are compositionally biased toward basic and acidic residues. S299 serves as the catalytic Nucleophile. Residues N403 to L422 are disordered.

Belongs to the ARB2A family.

It localises to the nucleus. The protein localises to the cytoplasm. Its function is as follows. May play role in the regulation of alternative splicing. May have hydrolase activity. This is Cotranscriptional regulator ARB2A homolog (arb2a) from Xenopus tropicalis (Western clawed frog).